The chain runs to 88 residues: Phosphocarrier protein HPr (88 aa).

The HPr domain occupies 1-88 (MEKKEFHIVA…ETLQKEGLAE (88 aa)). Residue histidine 15 is the Pros-phosphohistidine intermediate of the active site. Serine 46 is subject to Phosphoserine; by HPrK/P.

It belongs to the HPr family. Monomer.

It is found in the cytoplasm. With respect to regulation, phosphorylation on Ser-46 inhibits the phosphoryl transfer from enzyme I to HPr. In terms of biological role, general (non sugar-specific) component of the phosphoenolpyruvate-dependent sugar phosphotransferase system (sugar PTS). This major carbohydrate active-transport system catalyzes the phosphorylation of incoming sugar substrates concomitantly with their translocation across the cell membrane. The phosphoryl group from phosphoenolpyruvate (PEP) is transferred to the phosphoryl carrier protein HPr by enzyme I. Phospho-HPr then transfers it to the PTS EIIA domain. P-Ser-HPr interacts with the catabolite control protein A (CcpA), forming a complex that binds to DNA at the catabolite response elements cre, operator sites preceding a large number of catabolite-regulated genes. Thus, P-Ser-HPr is a corepressor in carbon catabolite repression (CCR), a mechanism that allows bacteria to coordinate and optimize the utilization of available carbon sources. P-Ser-HPr also plays a role in inducer exclusion, in which it probably interacts with several non-PTS permeases and inhibits their transport activity. This is Phosphocarrier protein HPr (ptsH) from Enterococcus faecalis (strain ATCC 700802 / V583).